An 84-amino-acid polypeptide reads, in one-letter code: MRKGSVKEVLAKIKYDPRENEEDYFIIIEHRGSYGNVRKIPVSLIELGHGYFFVGETQIPYHRILKVVRKDGRVVWESRKRGLK.

This sequence belongs to the UPF0248 family.

The polypeptide is UPF0248 protein PF1300 (Pyrococcus furiosus (strain ATCC 43587 / DSM 3638 / JCM 8422 / Vc1)).